The sequence spans 163 residues: MATYEGKVFTEEQEALVVKSWTVMKKKTAELGLKFFLKIFEIAPSAKKLFSFLRDSNVPLEQNTKLKPHAMSVFVMTCESAVQLRKAGKVTVRESNLKKLGATHFKYGVVDEHFEVTKFALLETIKEAVPDMWSDEMKNAWGEAYDRLVAAIKIEMKACSQAA.

A Globin domain is found at 8–157 (VFTEEQEALV…LVAAIKIEMK (150 aa)). Positions 41–45 (EIAPS) match the Homodimerization motif. Serine 51, lysine 65, histidine 69, lysine 99, threonine 103, and histidine 104 together coordinate heme b. The Homodimerization signature appears at 111–123 (DEHFEVTKFALLE).

Belongs to the plant globin family. Homodimer. Heme b serves as cofactor.

It localises to the cytoplasm. It is found in the nucleus. The enzyme catalyses Fe(III)-heme b-[protein] + nitric oxide + H2O = Fe(II)-heme b-[protein] + nitrite + 2 H(+). Its function is as follows. Phytoglobin that reduces nitrite to nitric oxide (NO) under anoxic conditions (e.g. during flooding or in waterlogged soil). May not function as an oxygen storage or transport protein. Has an unusually high affinity for O(2) through an hexacoordinate heme iron because of a very low dissociation constant. This Gossypium hirsutum (Upland cotton) protein is Anaerobic nitrite reductase HB1.